Consider the following 422-residue polypeptide: Enolase (422 aa).

Serine 41 lines the Mg(2+) pocket. Residue glutamate 163 participates in (2R)-2-phosphoglycerate binding. The active-site Proton donor is glutamate 204. 3 residues coordinate Mg(2+): aspartate 241, glutamate 284, and aspartate 311. The active-site Proton acceptor is the lysine 336. The (2R)-2-phosphoglycerate site is built by arginine 365, serine 366, and lysine 387.

This sequence belongs to the enolase family. In terms of assembly, homodimer. Component of the RNA degradosome, a multiprotein complex involved in RNA processing and mRNA degradation. It depends on Mg(2+) as a cofactor.

The protein localises to the cytoplasm. It is found in the secreted. Its subcellular location is the cell surface. It carries out the reaction (2R)-2-phosphoglycerate = phosphoenolpyruvate + H2O. The protein operates within carbohydrate degradation; glycolysis; pyruvate from D-glyceraldehyde 3-phosphate: step 4/5. Catalyzes the reversible conversion of 2-phosphoglycerate (2-PG) into phosphoenolpyruvate (PEP). It is essential for the degradation of carbohydrates via glycolysis. This Legionella pneumophila subsp. pneumophila (strain Philadelphia 1 / ATCC 33152 / DSM 7513) protein is Enolase.